The sequence spans 245 residues: Small ribosomal subunit protein uS3 (245 aa).

The KH type-2 domain maps to 39–111 (IRNFINKNYS…EVFFNVIEIK (73 aa)).

It belongs to the universal ribosomal protein uS3 family. Part of the 30S ribosomal subunit. Forms a tight complex with proteins S10 and S14.

Binds the lower part of the 30S subunit head. Binds mRNA in the 70S ribosome, positioning it for translation. The chain is Small ribosomal subunit protein uS3 from Phytoplasma mali (strain AT).